Reading from the N-terminus, the 585-residue chain is Proline-rich protein 14 (585 aa).

Methionine 1 carries the N-acetylmethionine modification. Residues methionine 1–proline 135 form a sufficient for heterochromatin association in interphase and chromatin association in anaphase region. Disordered stretches follow at residues alanine 23 to lysine 46, threonine 73 to glutamine 150, and isoleucine 189 to leucine 241. The tract at residues proline 85–proline 378 is required for the interaction with GRB2 and sufficient to promote the phosphorylation of AKT and cell proliferation. A compositionally biased stretch (basic residues) spans arginine 119–arginine 132. Positions glycine 136–glycine 365 are required for nuclear lamina association. The segment covering proline 193–glutamine 205 has biased composition (pro residues). Serine 277 carries the post-translational modification Phosphoserine. Disordered stretches follow at residues glutamate 290–arginine 445 and aspartate 525–glycine 557. Positions leucine 337–arginine 356 are enriched in pro residues. The span at serine 393–serine 409 shows a compositional bias: low complexity. The segment at arginine 518–serine 535 is required for nuclear localization.

In terms of assembly, interacts (via proline-rich region) with GRB2 (via SH3 domain 2). Interacts (via N-terminus) with CBX5.

It is found in the chromosome. The protein localises to the nucleus. The protein resides in the nucleus lamina. It localises to the nucleoplasm. Functions in tethering peripheral heterochromatin to the nuclear lamina during interphase, possibly through the interaction with heterochromatin protein CBX5/HP1 alpha. Might play a role in reattaching heterochromatin to the nuclear lamina at mitotic exit. Promotes myoblast differentiation during skeletal myogenesis, possibly by stimulating transcription factor MyoD activity via binding to CBX5/HP1 alpha. Involved in the positive regulation of the PI3K-Akt-mTOR signaling pathway and in promoting cell proliferation, possibly via binding to GRB2. The polypeptide is Proline-rich protein 14 (PRR14) (Homo sapiens (Human)).